The sequence spans 768 residues: DNA replication licensing factor MCM3 homolog 3 (768 aa).

Residues 290-497 (TFDLLGNSLA…IDRQISEHVA (208 aa)) enclose the MCM domain. Position 340–347 (340–347 (GDPSVAKS)) interacts with ATP. An Arginine finger motif is present at residues 472–475 (SRFD). Basic and acidic residues predominate over residues 661 to 670 (EMKQQADHDA). Residues 661–690 (EMKQQADHDAGATGGTVDGHGSSGNDPMDV) form a disordered region. The segment covering 672 to 682 (ATGGTVDGHGS) has biased composition (gly residues).

The protein belongs to the MCM family.

It localises to the nucleus. The enzyme catalyses ATP + H2O = ADP + phosphate + H(+). Its function is as follows. Acts as a factor that allows the DNA to undergo a single round of replication per cell cycle. Required for DNA replication and cell proliferation. May act as a component of the MCM complex which is the putative replicative helicase of the replication licensing system in eukaryotic cells. The sequence is that of DNA replication licensing factor MCM3 homolog 3 (ROA3) from Zea mays (Maize).